Consider the following 102-residue polypeptide: Putative defensin-like protein 298 (102 aa).

The signal sequence occupies residues 1–29 (MSASKATMLILFALFLSDILLVSIPRAEA). Cystine bridges form between C35/C53, C41/C58, C46/C60, C74/C93, C80/C98, and C86/C100.

The protein belongs to the DEFL family.

The protein resides in the secreted. This Arabidopsis thaliana (Mouse-ear cress) protein is Putative defensin-like protein 298.